Reading from the N-terminus, the 148-residue chain is Lysozyme C (148 aa).

The N-terminal stretch at 1-18 (MKAVIILGLVLLSVTVQG) is a signal peptide. Residues 19–148 (KIFERCELAR…VSQYVQGCGV (130 aa)) form the C-type lysozyme domain. Disulfide bonds link cysteine 24-cysteine 146, cysteine 48-cysteine 134, cysteine 83-cysteine 99, and cysteine 95-cysteine 113. Residues glutamate 53 and aspartate 71 contribute to the active site.

This sequence belongs to the glycosyl hydrolase 22 family. In terms of assembly, monomer.

The protein resides in the secreted. It catalyses the reaction Hydrolysis of (1-&gt;4)-beta-linkages between N-acetylmuramic acid and N-acetyl-D-glucosamine residues in a peptidoglycan and between N-acetyl-D-glucosamine residues in chitodextrins.. Functionally, lysozymes have primarily a bacteriolytic function; those in tissues and body fluids are associated with the monocyte-macrophage system and enhance the activity of immunoagents. The chain is Lysozyme C (LYZ) from Papio anubis (Olive baboon).